Reading from the N-terminus, the 393-residue chain is tRNA(Met) cytidine acetate ligase (393 aa).

Residues Gly-81, Asn-142, and Arg-167 each contribute to the ATP site.

This sequence belongs to the TmcAL family.

It localises to the cytoplasm. The catalysed reaction is cytidine(34) in elongator tRNA(Met) + acetate + ATP = N(4)-acetylcytidine(34) in elongator tRNA(Met) + AMP + diphosphate. Functionally, catalyzes the formation of N(4)-acetylcytidine (ac(4)C) at the wobble position of elongator tRNA(Met), using acetate and ATP as substrates. First activates an acetate ion to form acetyladenylate (Ac-AMP) and then transfers the acetyl group to tRNA to form ac(4)C34. This chain is tRNA(Met) cytidine acetate ligase, found in Bacillus cereus (strain Q1).